Consider the following 230-residue polypeptide: 7-cyano-7-deazaguanine synthase (230 aa).

Position 14 to 24 (14 to 24 (LSGGLDSTTTL)) interacts with ATP. Zn(2+)-binding residues include C194, C204, C207, and C210.

This sequence belongs to the QueC family. It depends on Zn(2+) as a cofactor.

It carries out the reaction 7-carboxy-7-deazaguanine + NH4(+) + ATP = 7-cyano-7-deazaguanine + ADP + phosphate + H2O + H(+). It participates in purine metabolism; 7-cyano-7-deazaguanine biosynthesis. Its function is as follows. Catalyzes the ATP-dependent conversion of 7-carboxy-7-deazaguanine (CDG) to 7-cyano-7-deazaguanine (preQ(0)). The chain is 7-cyano-7-deazaguanine synthase from Ruthia magnifica subsp. Calyptogena magnifica.